A 338-amino-acid chain; its full sequence is Ketol-acid reductoisomerase (NADP(+)) (338 aa).

The 181-residue stretch at 1–181 (MKVFYDKDAD…GGGRAGIIET (181 aa)) folds into the KARI N-terminal Rossmann domain. NADP(+) contacts are provided by residues 24-27 (YGSQ), R47, and S52. H107 is a catalytic residue. Position 133 (G133) interacts with NADP(+). The KARI C-terminal knotted domain occupies 182-327 (NFREETETDL…GKLRAMMPWI (146 aa)). The Mg(2+) site is built by D190, E194, E226, and E230. S251 contacts substrate.

It belongs to the ketol-acid reductoisomerase family. Requires Mg(2+) as cofactor.

The catalysed reaction is (2R)-2,3-dihydroxy-3-methylbutanoate + NADP(+) = (2S)-2-acetolactate + NADPH + H(+). It catalyses the reaction (2R,3R)-2,3-dihydroxy-3-methylpentanoate + NADP(+) = (S)-2-ethyl-2-hydroxy-3-oxobutanoate + NADPH + H(+). Its pathway is amino-acid biosynthesis; L-isoleucine biosynthesis; L-isoleucine from 2-oxobutanoate: step 2/4. The protein operates within amino-acid biosynthesis; L-valine biosynthesis; L-valine from pyruvate: step 2/4. Involved in the biosynthesis of branched-chain amino acids (BCAA). Catalyzes an alkyl-migration followed by a ketol-acid reduction of (S)-2-acetolactate (S2AL) to yield (R)-2,3-dihydroxy-isovalerate. In the isomerase reaction, S2AL is rearranged via a Mg-dependent methyl migration to produce 3-hydroxy-3-methyl-2-ketobutyrate (HMKB). In the reductase reaction, this 2-ketoacid undergoes a metal-dependent reduction by NADPH to yield (R)-2,3-dihydroxy-isovalerate. The polypeptide is Ketol-acid reductoisomerase (NADP(+)) (Cupriavidus metallidurans (strain ATCC 43123 / DSM 2839 / NBRC 102507 / CH34) (Ralstonia metallidurans)).